The chain runs to 299 residues: Oxygen-dependent coproporphyrinogen-III oxidase (299 aa).

Substrate is bound at residue Ser-92. The Mn(2+) site is built by His-96 and His-106. The Proton donor role is filled by His-106. Residue 108–110 (NVR) participates in substrate binding. Mn(2+) is bound by residues His-145 and His-175. An important for dimerization region spans residues 240–275 (YVEFNLVWDRGTLFGLQTGGRTESILMSMPPLVRWE). 258 to 260 (GGR) lines the substrate pocket.

The protein belongs to the aerobic coproporphyrinogen-III oxidase family. As to quaternary structure, homodimer. Mn(2+) is required as a cofactor.

It localises to the cytoplasm. The enzyme catalyses coproporphyrinogen III + O2 + 2 H(+) = protoporphyrinogen IX + 2 CO2 + 2 H2O. It functions in the pathway porphyrin-containing compound metabolism; protoporphyrin-IX biosynthesis; protoporphyrinogen-IX from coproporphyrinogen-III (O2 route): step 1/1. Involved in the heme biosynthesis. Catalyzes the aerobic oxidative decarboxylation of propionate groups of rings A and B of coproporphyrinogen-III to yield the vinyl groups in protoporphyrinogen-IX. This is Oxygen-dependent coproporphyrinogen-III oxidase from Escherichia coli (strain K12 / MC4100 / BW2952).